Reading from the N-terminus, the 309-residue chain is Ribonuclease Z (309 aa).

Zn(2+) contacts are provided by His61, His63, Asp65, His66, His144, Asp212, and His271. The active-site Proton acceptor is the Asp65.

It belongs to the RNase Z family. In terms of assembly, homodimer. Zn(2+) is required as a cofactor.

It catalyses the reaction Endonucleolytic cleavage of RNA, removing extra 3' nucleotides from tRNA precursor, generating 3' termini of tRNAs. A 3'-hydroxy group is left at the tRNA terminus and a 5'-phosphoryl group is left at the trailer molecule.. In terms of biological role, zinc phosphodiesterase, which displays some tRNA 3'-processing endonuclease activity. Probably involved in tRNA maturation, by removing a 3'-trailer from precursor tRNA. This chain is Ribonuclease Z, found in Clostridium acetobutylicum (strain ATCC 824 / DSM 792 / JCM 1419 / IAM 19013 / LMG 5710 / NBRC 13948 / NRRL B-527 / VKM B-1787 / 2291 / W).